A 469-amino-acid polypeptide reads, in one-letter code: ATP-dependent protease ATPase subunit HslU (469 aa).

ATP-binding positions include I21, G63–E68, D282, E347, and R419.

This sequence belongs to the ClpX chaperone family. HslU subfamily. As to quaternary structure, a double ring-shaped homohexamer of HslV is capped on each side by a ring-shaped HslU homohexamer. The assembly of the HslU/HslV complex is dependent on binding of ATP.

The protein localises to the cytoplasm. In terms of biological role, ATPase subunit of a proteasome-like degradation complex; this subunit has chaperone activity. The binding of ATP and its subsequent hydrolysis by HslU are essential for unfolding of protein substrates subsequently hydrolyzed by HslV. HslU recognizes the N-terminal part of its protein substrates and unfolds these before they are guided to HslV for hydrolysis. The sequence is that of ATP-dependent protease ATPase subunit HslU from Petrotoga mobilis (strain DSM 10674 / SJ95).